The following is a 179-amino-acid chain: Altered inheritance of mitochondria protein 11 (179 aa).

Helical transmembrane passes span 56-78 (MLRF…RGTI) and 105-127 (AFAY…TCWL).

This sequence belongs to the AIM11 family.

Its subcellular location is the membrane. In Eremothecium gossypii (strain ATCC 10895 / CBS 109.51 / FGSC 9923 / NRRL Y-1056) (Yeast), this protein is Altered inheritance of mitochondria protein 11 (AIM11).